The following is a 94-amino-acid chain: Aspartyl/glutamyl-tRNA(Asn/Gln) amidotransferase subunit C (94 aa).

It belongs to the GatC family. Heterotrimer of A, B and C subunits.

It carries out the reaction L-glutamyl-tRNA(Gln) + L-glutamine + ATP + H2O = L-glutaminyl-tRNA(Gln) + L-glutamate + ADP + phosphate + H(+). The catalysed reaction is L-aspartyl-tRNA(Asn) + L-glutamine + ATP + H2O = L-asparaginyl-tRNA(Asn) + L-glutamate + ADP + phosphate + 2 H(+). Functionally, allows the formation of correctly charged Asn-tRNA(Asn) or Gln-tRNA(Gln) through the transamidation of misacylated Asp-tRNA(Asn) or Glu-tRNA(Gln) in organisms which lack either or both of asparaginyl-tRNA or glutaminyl-tRNA synthetases. The reaction takes place in the presence of glutamine and ATP through an activated phospho-Asp-tRNA(Asn) or phospho-Glu-tRNA(Gln). This chain is Aspartyl/glutamyl-tRNA(Asn/Gln) amidotransferase subunit C, found in Opitutus terrae (strain DSM 11246 / JCM 15787 / PB90-1).